The chain runs to 296 residues: Ribosomal RNA small subunit methyltransferase A (296 aa).

S-adenosyl-L-methionine contacts are provided by N30, L32, G57, E78, D103, and N128.

It belongs to the class I-like SAM-binding methyltransferase superfamily. rRNA adenine N(6)-methyltransferase family. RsmA subfamily.

It localises to the cytoplasm. The enzyme catalyses adenosine(1518)/adenosine(1519) in 16S rRNA + 4 S-adenosyl-L-methionine = N(6)-dimethyladenosine(1518)/N(6)-dimethyladenosine(1519) in 16S rRNA + 4 S-adenosyl-L-homocysteine + 4 H(+). In terms of biological role, specifically dimethylates two adjacent adenosines (A1518 and A1519) in the loop of a conserved hairpin near the 3'-end of 16S rRNA in the 30S particle. May play a critical role in biogenesis of 30S subunits. This chain is Ribosomal RNA small subunit methyltransferase A, found in Staphylococcus epidermidis (strain ATCC 35984 / DSM 28319 / BCRC 17069 / CCUG 31568 / BM 3577 / RP62A).